The chain runs to 906 residues: Catenin alpha-1 (906 aa).

An N-acetylthreonine modification is found at T2. Residues 2 to 228 (TAVHTGNINF…PILYTASQAC (227 aa)) form an involved in homodimerization region. K57 participates in a covalent cross-link: Glycyl lysine isopeptide (Lys-Gly) (interchain with G-Cter in SUMO2). The segment at 97 to 148 (VRKQCDLMKSAAGEFADDPCSSVKRGNMVRAARALLSAVTRLLILADMADVY) is interaction with JUP and CTNNB1. Residues S264, S268, S295, and S297 each carry the phosphoserine modification. Positions 325–394 (TRDDRRERIV…AVMDHVSDSF (70 aa)) are interaction with alpha-actinin. T634 is modified (phosphothreonine). Position 641 is a phosphoserine (S641). A Phosphothreonine modification is found at T645. Residues S652 and S655 each carry the phosphoserine modification. The residue at position 658 (T658) is a Phosphothreonine. K797 participates in a covalent cross-link: Glycyl lysine isopeptide (Lys-Gly) (interchain with G-Cter in SUMO2). Position 851 is a phosphoserine (S851). Residues 864 to 880 (PEKKPLVKREKQDETQT) are compositionally biased toward basic and acidic residues. Residues 864–894 (PEKKPLVKREKQDETQTKIKRASQKKHVNPV) form a disordered region. Over residues 881–891 (KIKRASQKKHV) the composition is skewed to basic residues.

Belongs to the vinculin/alpha-catenin family. In terms of assembly, monomer and homodimer; the monomer preferentially binds to CTNNB1 and the homodimer to actin. Component of an cadherin:catenin adhesion complex composed of at least of CDH26, beta-catenin/CTNNB1, alpha-catenin/CTNNA1 and p120 catenin/CTNND1. Possible component of an E-cadherin/ catenin adhesion complex together with E-cadherin/CDH1 and beta-catenin/CTNNB1 or gamma-catenin/JUP; the complex is located to adherens junctions. The stable association of CTNNA1 is controversial as CTNNA1 was shown not to bind to F-actin when assembled in the complex. Alternatively, the CTNNA1-containing complex may be linked to F-actin by other proteins such as LIMA1. Binds AFDN and F-actin. Interacts with ARHGAP21. Interacts with AJUBA. Interacts with LIMA1. Interacts with vinculin/VCL. Interacts with TJP2/ZO2 (via N-terminus). Interacts with TJP1/ZO1 (via N-terminus). Post-translationally, sumoylated. In terms of processing, phosphorylation seems to contribute to the strength of cell-cell adhesion rather than to the basic capacity for cell-cell adhesion.

It localises to the cytoplasm. It is found in the cytoskeleton. Its subcellular location is the cell junction. The protein resides in the adherens junction. The protein localises to the cell membrane. It localises to the nucleus. Its function is as follows. Associates with the cytoplasmic domain of a variety of cadherins. The association of catenins to cadherins produces a complex which is linked to the actin filament network, and which seems to be of primary importance for cadherins cell-adhesion properties. Can associate with both E- and N-cadherins. Originally believed to be a stable component of E-cadherin/catenin adhesion complexes and to mediate the linkage of cadherins to the actin cytoskeleton at adherens junctions. In contrast, cortical actin was found to be much more dynamic than E-cadherin/catenin complexes and CTNNA1 was shown not to bind to F-actin when assembled in the complex suggesting a different linkage between actin and adherens junctions components. The homodimeric form may regulate actin filament assembly and inhibit actin branching by competing with the Arp2/3 complex for binding to actin filaments. Involved in the regulation of WWTR1/TAZ, YAP1 and TGFB1-dependent SMAD2 and SMAD3 nuclear accumulation. May play a crucial role in cell differentiation. The polypeptide is Catenin alpha-1 (Bos taurus (Bovine)).